The chain runs to 98 residues: Major carboxysome shell protein CsoS1A (98 aa).

The region spanning 8-93 (ALGMIETRGL…VHSEVENILP (86 aa)) is the BMC domain.

It belongs to the bacterial microcompartments protein family. CsoS1 subfamily. As to quaternary structure, homohexamer with a small central pore; the concave side is mostly positive electrostatic potential, whereas the convex side is mostly negative electrostatic potential. Forms a CsoS2-CsoS1-RuBisCO complex. Interacts with the N-terminus (residues 1-136) of RuBisCO (CbbL).

It localises to the carboxysome. The major shell protein of the carboxysome, a polyhedral inclusion where RuBisCO (ribulose bisphosphate carboxylase, ccbL-ccbS) is sequestered. Assembles into hexamers which make sheets that form the facets of the polyhedral carboxysome. The shell probably limits the diffusion of CO(2) into and out of the carboxysome. Molecular modeling shows the central pore of this protein is selectively permeable to anions such as HCO(3) rather than CO(2) or O(2). There are estimated to be 2970 CsoS1A/CsoS1C proteins per carboxysome (the proteins differ by only 1 residue). Functionally, unlike beta-carboxysomes, alpha-carboxysomes (Cb) can form without cargo protein. CsoS2 is essential for Cb formation and is also capable of targeting foreign proteins to the Cb. The Cb shell assembles with the aid of CsoS2; CsoS1A, CsoS1B and CsoS1C form the majority of the shell while CsoS4A and CsoS4B form vertices. CsoS1D forms pseudohexamers that probably control metabolite flux into and out of the shell. The chain is Major carboxysome shell protein CsoS1A from Halothiobacillus neapolitanus (strain ATCC 23641 / c2) (Thiobacillus neapolitanus).